The following is a 492-amino-acid chain: Sestrin-3 (492 aa).

The interval 62–243 (LVEEYSTSGR…VCDLANDNSI (182 aa)) is N-terminal domain; may mediate the alkylhydroperoxide reductase activity. The Cysteine sulfenic acid (-SOH) intermediate role is filled by Cys121. The segment at 310–492 (PHSDFEDDVI…ALRAITRHLT (183 aa)) is C-terminal domain; mediates TORC1 regulation. Residues 386–389 (TYNT), Thr398, and Glu463 each bind L-leucine.

The protein belongs to the sestrin family. Interacts with the GATOR2 complex which is composed of MIOS, SEC13, SEH1L, WDR24 and WDR59; the interaction is not regulated by leucine. Interacts with RRAGA, RRAGB, RRAGC and RRAGD; may function as a guanine nucleotide dissociation inhibitor for RRAGs and regulate them. Interacts with the TORC2 complex; through RICTOR. Detected in liver and skeletal muscles.

Its subcellular location is the cytoplasm. The catalysed reaction is a hydroperoxide + L-cysteinyl-[protein] = S-hydroxy-L-cysteinyl-[protein] + an alcohol. Functionally, may function as an intracellular leucine sensor that negatively regulates the TORC1 signaling pathway. May also regulate the insulin-receptor signaling pathway through activation of TORC2. This metabolic regulator may also play a role in protection against oxidative and genotoxic stresses. May prevent the accumulation of reactive oxygen species (ROS) through the alkylhydroperoxide reductase activity born by the N-terminal domain of the protein. This Mus musculus (Mouse) protein is Sestrin-3.